The primary structure comprises 117 residues: Protein P16 (117 aa).

Residues 7–24 (LYWVGGGLVLILIWLWFR) form a helical membrane-spanning segment.

It is found in the virion membrane. Protein of the infection vertex complex, which increases the vertex stability. Anchors the vertex structure to the viral membrane. Essential for viral infectivity. In Enterobacteria phage PRD1 (Bacteriophage PRD1), this protein is Protein P16 (XVI).